A 1363-amino-acid polypeptide reads, in one-letter code: MAPGVLLQPSQSELEAASPPKAAASLLQLTEEWDDTIRFYLNGTKVILDSVDPEITLLEYLRGIGLTGTKLGCAEGGCGACTVVVSQINPTTKKLYHASINACIAPLVAVDGKHVITVEGIGNVKNPHAIQQRLAIGNGSQCGFCTPGIVMSLYALLRNDPKPSEHAVEEAFDGNLCRCTGYRPILDAAQSFTSPIGCGKARANGGSGCCMEEQKGTNGCCKGSSEETTEDVKHKFASPDFIEYKPDTELIFPPSLWKHELRPLAFGNKRKKWYRPVTVQQLLEIKSIHPDAKLIGGSTETQIEIKFKQMRYGASVYLGDLAELRQFAFHDNYLEIGANISLTDLESVCDQAIERYGSARGQPFAAIKKQLRYFAGRQIRNVASPAGNLATASPISDLNPVFVATNTTLVARSLDKETEIPMTQFFRGYRSTALPPDAIISSLRIPTASEKGEYLRAYKQSKRKDDDIAIVNAALRVSLSSSNDVTSVSLVFGGMAPLTVSARNAEAFLTGKKFTDPATLEGTMGALEQDFNLKFGVPGGMATYRKSLALGFFYRFYHDVLSQIEARSSDLDNSVVAEIERAISTGEKDNEASAAYQQRVLGRAGPHLSALKQATGEAQYTDDIPAQKNELYGCMVLSTKAHAKLLSVNTEAALEIPGVIDYVDHKDLPSPRANWWGAPNCDEVFFAVDKVTTAGQPIGMILANTAKAAEEGARAVKVEYEELPVILSIEEAIEAQSFFERFRYIKNGDPESAFRDADHVFEGVSRMGGQEHFYLETQACVAIPKAEDGEMEIWSSTQNPTETQSYVAQVTGVAANKIVSRVKRLGGGFGGKETRSVQLAGICATAAAKVRRPVRCMLNRDEDIATSGQRHPFYCKWKVGVTREGKLLALDADVYANGGHTQDLSGAVVERSLSHIDNVYRFPNIYVRGRICKTNTVSNTAFRGFGGPQGLFFAESIISEVADHLDLQVEQLRILNMYEPGDMTHFNQELKDWHVPLMYDQVLQESEYFERRKAVEEYNRTHKWSKRGMAIIPTKFGISFTALFLNQAGALVHIYHDGSVLVAHGGVEMGQGLHTKMTMIAAEALGVPLSDVFISETATNTVANTSSTAASASSDLNGYAIYNACTQLNERLKPYREKMPNATLKDLAHAAYFDRVNLSAQGYYRTPDIGYTWGENKGQMFFYFTQGVTAAEVEIDTLTGDWTPLRADIKMDVGRTINPSIDYGQIEGAYIQGQGLFTTEESLWHRTTGQIFTKGPGNYKIPGFRDIPQIFNVSLLKDVEWENLRTIQRSRGVGEPPLFMGSAAFFAIRDALKAARKEWGVTDVLSLVSPATPERIRVSCADPIIERARVKAEEGEKSFFVAI.

Residues D35 to I121 enclose the 2Fe-2S ferredoxin-type domain. [2Fe-2S] cluster is bound by residues C73, C78, C81, C103, C142, C145, C177, and C179. Positions F266–E450 constitute an FAD-binding PCMH-type domain. FAD-binding positions include L294–T301, F374, S384–N388, D397, and K459. Residues Q798 and F829 each coordinate Mo-molybdopterin. Positions 833 and 911 each coordinate substrate. R943 is a Mo-molybdopterin binding site. 2 residues coordinate substrate: F945 and T1041. A1110 lines the Mo-molybdopterin pocket. The Proton acceptor role is filled by E1295.

This sequence belongs to the xanthine dehydrogenase family. Requires FAD as cofactor. The cofactor is Mo-molybdopterin. It depends on [2Fe-2S] cluster as a cofactor.

It localises to the peroxisome. It catalyses the reaction xanthine + NAD(+) + H2O = urate + NADH + H(+). It carries out the reaction hypoxanthine + NAD(+) + H2O = xanthine + NADH + H(+). Key enzyme in purine degradation. Catalyzes the oxidation of hypoxanthine to xanthine. Catalyzes the oxidation of xanthine to uric acid. This Emericella nidulans (strain FGSC A4 / ATCC 38163 / CBS 112.46 / NRRL 194 / M139) (Aspergillus nidulans) protein is Xanthine dehydrogenase (hxA).